The chain runs to 397 residues: Tryptophan synthase beta chain (397 aa).

Lys87 bears the N6-(pyridoxal phosphate)lysine mark.

It belongs to the TrpB family. As to quaternary structure, tetramer of two alpha and two beta chains. The cofactor is pyridoxal 5'-phosphate.

It carries out the reaction (1S,2R)-1-C-(indol-3-yl)glycerol 3-phosphate + L-serine = D-glyceraldehyde 3-phosphate + L-tryptophan + H2O. The protein operates within amino-acid biosynthesis; L-tryptophan biosynthesis; L-tryptophan from chorismate: step 5/5. The beta subunit is responsible for the synthesis of L-tryptophan from indole and L-serine. The protein is Tryptophan synthase beta chain of Escherichia coli O127:H6 (strain E2348/69 / EPEC).